We begin with the raw amino-acid sequence, 429 residues long: Phosphoglucosamine mutase (429 aa).

Residue Ser-96 is the Phosphoserine intermediate of the active site. Mg(2+) contacts are provided by Ser-96, Asp-230, Asp-232, and Asp-234. Ser-96 bears the Phosphoserine mark.

This sequence belongs to the phosphohexose mutase family. It depends on Mg(2+) as a cofactor. In terms of processing, activated by phosphorylation.

The enzyme catalyses alpha-D-glucosamine 1-phosphate = D-glucosamine 6-phosphate. In terms of biological role, catalyzes the conversion of glucosamine-6-phosphate to glucosamine-1-phosphate. The chain is Phosphoglucosamine mutase from Thermotoga maritima (strain ATCC 43589 / DSM 3109 / JCM 10099 / NBRC 100826 / MSB8).